A 90-amino-acid polypeptide reads, in one-letter code: DNA-binding protein HU-alpha (90 aa).

Belongs to the bacterial histone-like protein family. In terms of assembly, heterodimer of an alpha and a beta chain.

Histone-like DNA-binding protein which is capable of wrapping DNA to stabilize it, and thus to prevent its denaturation under extreme environmental conditions. In Vibrio cholerae serotype O1 (strain ATCC 39315 / El Tor Inaba N16961), this protein is DNA-binding protein HU-alpha (hupA).